The primary structure comprises 652 residues: DNA ligase (652 aa).

Residues 29–33 (DSDYD), 78–79 (SL), and Glu-107 contribute to the NAD(+) site. Lys-109 (N6-AMP-lysine intermediate) is an active-site residue. The NAD(+) site is built by Arg-130, Glu-164, Lys-278, and Lys-302. Residues Cys-395, Cys-398, Cys-413, and Cys-418 each contribute to the Zn(2+) site. The BRCT domain occupies 577–652 (NSDAALFGLT…IEDEDWLRQL (76 aa)).

The protein belongs to the NAD-dependent DNA ligase family. LigA subfamily. Mg(2+) serves as cofactor. Requires Mn(2+) as cofactor.

The catalysed reaction is NAD(+) + (deoxyribonucleotide)n-3'-hydroxyl + 5'-phospho-(deoxyribonucleotide)m = (deoxyribonucleotide)n+m + AMP + beta-nicotinamide D-nucleotide.. In terms of biological role, DNA ligase that catalyzes the formation of phosphodiester linkages between 5'-phosphoryl and 3'-hydroxyl groups in double-stranded DNA using NAD as a coenzyme and as the energy source for the reaction. It is essential for DNA replication and repair of damaged DNA. The chain is DNA ligase from Streptococcus pyogenes serotype M4 (strain MGAS10750).